A 240-amino-acid polypeptide reads, in one-letter code: MSAAPASNGVFVVIPPNNASGLCPPPAILPTSMCQPPGIMQFEEPPLGAQTPRATQPPDLRPVETFLTGEPKVLGTVQILIGLIHLGFGSVLLMVRRGHVGIFFIEGGVPFWGGACFIISGSLSVAAEKNHTSCLVRSSLGTNILSVMAAFAGTAILLMDFGVTNRDVDRGYLAVLTIFTVLEFFTAVIAMHFGCQAIHAQASAPVIFLPNAFSADFNIPSPAASAPPAYDNVAYAQGVV.

Transmembrane regions (helical) follow at residues 73–93 (VLGT…SVLL), 100–120 (VGIF…FIIS), 144–164 (ILSV…FGVT), and 173–193 (LAVL…AMHF).

Belongs to the MS4A family.

The protein resides in the membrane. Functionally, may be involved in signal transduction as a component of a multimeric receptor complex. This is Membrane-spanning 4-domains subfamily A member 15 (MS4A15) from Homo sapiens (Human).